Reading from the N-terminus, the 276-residue chain is Diaminopimelate epimerase (276 aa).

Residues asparagine 13, glutamine 46, and asparagine 66 each contribute to the substrate site. The active-site Proton donor is the cysteine 75. Substrate is bound by residues 76–77 (GN), asparagine 159, asparagine 192, and 210–211 (ER). The active-site Proton acceptor is cysteine 219. Position 220-221 (220-221 (GT)) interacts with substrate.

The protein belongs to the diaminopimelate epimerase family. As to quaternary structure, homodimer.

It is found in the cytoplasm. The enzyme catalyses (2S,6S)-2,6-diaminopimelate = meso-2,6-diaminopimelate. Its pathway is amino-acid biosynthesis; L-lysine biosynthesis via DAP pathway; DL-2,6-diaminopimelate from LL-2,6-diaminopimelate: step 1/1. Its function is as follows. Catalyzes the stereoinversion of LL-2,6-diaminopimelate (L,L-DAP) to meso-diaminopimelate (meso-DAP), a precursor of L-lysine and an essential component of the bacterial peptidoglycan. This chain is Diaminopimelate epimerase, found in Pseudomonas aeruginosa (strain LESB58).